We begin with the raw amino-acid sequence, 346 residues long: Large ribosomal subunit protein uL1c (346 aa).

Residues 1–70 (MAACATHSSL…RASNHKFIVS (70 aa)) constitute a chloroplast transit peptide. Y129 is subject to Phosphotyrosine. The residue at position 177 (T177) is a Phosphothreonine. S197 is modified (phosphoserine).

Belongs to the universal ribosomal protein uL1 family. As to quaternary structure, part of the 50S ribosomal subunit.

It localises to the plastid. The protein localises to the chloroplast. Functionally, this protein binds directly to 23S ribosomal RNA. The polypeptide is Large ribosomal subunit protein uL1c (RPL1) (Arabidopsis thaliana (Mouse-ear cress)).